Consider the following 155-residue polypeptide: UPF0260 protein R01011 (155 aa).

The protein belongs to the UPF0260 family.

The protein is UPF0260 protein R01011 of Rhizobium meliloti (strain 1021) (Ensifer meliloti).